Reading from the N-terminus, the 1074-residue chain is DNA annealing helicase and endonuclease ZRANB3 (1074 aa).

The 163-residue stretch at 46-208 folds into the Helicase ATP-binding domain; it reads TFALRRDGRC…FMQIEALFPQ (163 aa). The DNA annealing helicase activity stretch occupies residues 46–481; sequence TFALRRDGRC…GRKEKLQAEE (436 aa). 59–66 contacts ATP; that stretch reads DEMGLGKT. The short motif at 157-160 is the DEAH box element; it reads DESH. The 157-residue stretch at 325 to 481 folds into the Helicase C-terminal domain; the sequence is AVKDYIKMML…GRKEKLQAEE (157 aa). Residues 519–526 carry the PIP-box motif; that stretch reads QRDIRSFF. The residue at position 566 (Ser-566) is a Phosphoserine. The RanBP2-type zinc-finger motif lies at 617 to 647; that stretch reads FCGEGWQCAFCTYINNSVLPYCEMCENPRGG. Residues 659 to 719 form a disordered region; that stretch reads QNKNKNEKDD…RLTPQPGDEQ (61 aa). Composition is skewed to basic and acidic residues over residues 662-674 and 696-711; these read NKNEKDDSQDTSK and AKSKEEISTTESEDRL. The region spanning 1006 to 1046 is the HNH domain; the sequence is PGEGHFWQVDHIKPVSGGGGQCSLDNLQTLCTVCHRERTAQ. The interval 1006–1074 is endonuclease activity; that stretch reads PGEGHFWQVD…SDITRFLVKK (69 aa). An APIM motif motif is present at residues 1069 to 1073; it reads RFLVK.

The protein belongs to the SNF2/RAD54 helicase family. In terms of assembly, interacts (via PIP-box and RanBP2-type zinc finger) with PCNA (when PCNA is polyubiquitinated via 'Lys-63'-linked polyubiquitin).

Its subcellular location is the nucleus. The protein resides in the chromosome. DNA annealing helicase and endonuclease required to maintain genome stability at stalled or collapsed replication forks by facilitating fork restart and limiting inappropriate recombination that could occur during template switching events. Recruited to the sites of stalled DNA replication by polyubiquitinated PCNA and acts as a structure-specific endonuclease that cleaves the replication fork D-loop intermediate, generating an accessible 3'-OH group in the template of the leading strand, which is amenable to extension by DNA polymerase. In addition to endonuclease activity, also catalyzes the fork regression via annealing helicase activity in order to prevent disintegration of the replication fork and the formation of double-strand breaks. This is DNA annealing helicase and endonuclease ZRANB3 (ZRANB3) from Bos taurus (Bovine).